Here is a 572-residue protein sequence, read N- to C-terminus: M-phase inducer phosphatase 3 (572 aa).

Disordered stretches follow at residues 95–117 (NLGD…GKLE) and 304–354 (SPSM…QRRG). The 108-residue stretch at 420 to 527 (LVEKFFIIDC…FFPEYKELCE (108 aa)) folds into the Rhodanese domain. Cysteine 476 is a catalytic residue.

The protein belongs to the MPI phosphatase family.

The enzyme catalyses O-phospho-L-tyrosyl-[protein] + H2O = L-tyrosyl-[protein] + phosphate. Functionally, this protein functions as a dosage-dependent inducer in mitotic control. It is a tyrosine protein phosphatase required for progression of the cell cycle. It may directly dephosphorylate p34(cdc2) and activate the p34(cdc2) kinase activity. The sequence is that of M-phase inducer phosphatase 3 (cdc25-3) from Xenopus laevis (African clawed frog).